We begin with the raw amino-acid sequence, 232 residues long: Large ribosomal subunit protein uL1 (232 aa).

It belongs to the universal ribosomal protein uL1 family. In terms of assembly, part of the 50S ribosomal subunit.

Its function is as follows. Binds directly to 23S rRNA. The L1 stalk is quite mobile in the ribosome, and is involved in E site tRNA release. In terms of biological role, protein L1 is also a translational repressor protein, it controls the translation of the L11 operon by binding to its mRNA. The chain is Large ribosomal subunit protein uL1 from Pelotomaculum thermopropionicum (strain DSM 13744 / JCM 10971 / SI).